The sequence spans 205 residues: Small ribosomal subunit protein uS4 (205 aa).

An S4 RNA-binding domain is found at 95-156; sequence SRLDNIVYRM…KTIKIPIVKA (62 aa).

The protein belongs to the universal ribosomal protein uS4 family. Part of the 30S ribosomal subunit. Contacts protein S5. The interaction surface between S4 and S5 is involved in control of translational fidelity.

Its function is as follows. One of the primary rRNA binding proteins, it binds directly to 16S rRNA where it nucleates assembly of the body of the 30S subunit. With S5 and S12 plays an important role in translational accuracy. The polypeptide is Small ribosomal subunit protein uS4 (Mycoplasma pneumoniae (strain ATCC 29342 / M129 / Subtype 1) (Mycoplasmoides pneumoniae)).